A 102-amino-acid polypeptide reads, in one-letter code: Virulence plasmid protein pGP4-D (102 aa).

The chain is Virulence plasmid protein pGP4-D from Chlamydia trachomatis serovar L2 (strain ATCC VR-902B / DSM 19102 / 434/Bu).